Reading from the N-terminus, the 491-residue chain is uncharacterized protein (491 aa).

Positions 1–92 (MSFVIASPEA…GGGSYASAEI (92 aa)) constitute a PE domain. Disordered regions lie at residues 114 to 156 (PLVG…AGGA), 376 to 400 (AGGS…GNPG), and 419 to 491 (AGQG…GPDG). Over residues 128-145 (GQPGGDGGILWGNGGNGG) the composition is skewed to gly residues. Residues 432–480 (GGPGGVGGHGGTAILFGDGGAGGAGAAGGPGTPDGAAGPGGSGGTGGLL) are compositionally biased toward gly residues.

The protein belongs to the mycobacterial PE family. PGRS subfamily.

This is an uncharacterized protein from Mycobacterium bovis (strain ATCC BAA-935 / AF2122/97).